Here is a 313-residue protein sequence, read N- to C-terminus: Methionyl-tRNA formyltransferase (313 aa).

The tract at residues 32 to 51 (QPDRRKGRGKELQPPPAKRK) is disordered. 109–112 (SLLP) contributes to the (6S)-5,6,7,8-tetrahydrofolate binding site.

Belongs to the Fmt family.

The catalysed reaction is L-methionyl-tRNA(fMet) + (6R)-10-formyltetrahydrofolate = N-formyl-L-methionyl-tRNA(fMet) + (6S)-5,6,7,8-tetrahydrofolate + H(+). Attaches a formyl group to the free amino group of methionyl-tRNA(fMet). The formyl group appears to play a dual role in the initiator identity of N-formylmethionyl-tRNA by promoting its recognition by IF2 and preventing the misappropriation of this tRNA by the elongation apparatus. This chain is Methionyl-tRNA formyltransferase, found in Natranaerobius thermophilus (strain ATCC BAA-1301 / DSM 18059 / JW/NM-WN-LF).